Consider the following 230-residue polypeptide: Lecithin retinol acyltransferase (230 aa).

Over 1–194 the chain is Cytoplasmic; sequence MKNPMLEVVS…VKIIIRDQRS (194 aa). An LRAT domain is found at 50-177; the sequence is VLEVPRTHLT…CRYGTPISPQ (128 aa). Active-site residues include H60 and H72. C161 functions as the Acyl-thioester intermediate in the catalytic mechanism. A helical membrane pass occupies residues 195 to 215; sequence VLASAVLGLASIVCTGLVSYT. The Lumenal portion of the chain corresponds to 216-230; the sequence is TLPAIFIPFFLWMAG.

This sequence belongs to the H-rev107 family. As to expression, hepatic stellate cells and endothelial cells (at protein level). Found at high levels in testis and liver, followed by retinal pigment epithelium, small intestine, prostate, pancreas and colon. Low expression observed in brain. In fetal tissues, expressed in retinal pigment epithelium and liver, and barely in the brain.

The protein resides in the endoplasmic reticulum membrane. It is found in the rough endoplasmic reticulum. The protein localises to the endosome. Its subcellular location is the multivesicular body. It localises to the cytoplasm. The protein resides in the perinuclear region. It carries out the reaction all-trans-retinol--[retinol-binding protein] + a 1,2-diacyl-sn-glycero-3-phosphocholine = apo--[retinol-binding protein] + an all-trans-retinyl ester + a 2-acyl-sn-glycero-3-phosphocholine. The enzyme catalyses 1,2-dihexadecanoyl-sn-glycero-3-phosphocholine + all-trans-retinol = all-trans-retinyl hexadecanoate + 2-hexadecanoyl-sn-glycero-3-phosphocholine. It catalyses the reaction 1,2-diheptanoyl-sn-glycero-3-phosphocholine + all-trans-retinol--[retinol-binding protein] = all-trans-retinyl heptanoate + 2-heptanoyl-sn-glycero-3-phosphocholine + apo--[retinol-binding protein]. The catalysed reaction is 1,2-dioctanoyl-sn-glycero-3-phosphocholine + all-trans-retinol--[retinol-binding protein] = 2-octanoyl-sn-glycero-3-phosphocholine + all-trans-retinyl octanoate + apo--[retinol-binding protein]. It carries out the reaction all-trans-retinol--[retinol-binding protein] + 1,2-dihexadecanoyl-sn-glycero-3-phosphocholine = apo--[retinol-binding protein] + all-trans-retinyl hexadecanoate + 2-hexadecanoyl-sn-glycero-3-phosphocholine. The enzyme catalyses 1,2-didodecanoyl-sn-glycero-3-phosphocholine + all-trans-retinol--[retinol-binding protein] = 2-dodecanoyl-sn-glycero-3-phosphocholine + all-trans-retinyl dodecanoate + apo--[retinol-binding protein]. It participates in cofactor metabolism; retinol metabolism. With respect to regulation, inhibited by all-trans-retinyl alpha-bromoacetate and N-boc-L-biocytinyl-11-aminoundecane chloro-methyl ketone (BACMK). Functionally, transfers the acyl group from the sn-1 position of phosphatidylcholine to all-trans retinol, producing all-trans retinyl esters. Retinyl esters are storage forms of vitamin A. LRAT plays a critical role in vision. It provides the all-trans retinyl ester substrates for the isomerohydrolase which processes the esters into 11-cis-retinol in the retinal pigment epithelium; due to a membrane-associated alcohol dehydrogenase, 11 cis-retinol is oxidized and converted into 11-cis-retinaldehyde which is the chromophore for rhodopsin and the cone photopigments. Required for the survival of cone photoreceptors and correct rod photoreceptor cell morphology. The chain is Lecithin retinol acyltransferase from Homo sapiens (Human).